A 120-amino-acid polypeptide reads, in one-letter code: Chaperonin GroEL (120 aa).

An ATP-binding site is contributed by 23-27 (DGTTT).

It belongs to the chaperonin (HSP60) family. As to quaternary structure, forms a cylinder of 14 subunits composed of two heptameric rings stacked back-to-back. Interacts with the co-chaperonin GroES.

It is found in the cytoplasm. It catalyses the reaction ATP + H2O + a folded polypeptide = ADP + phosphate + an unfolded polypeptide.. In terms of biological role, together with its co-chaperonin GroES, plays an essential role in assisting protein folding. The GroEL-GroES system forms a nano-cage that allows encapsulation of the non-native substrate proteins and provides a physical environment optimized to promote and accelerate protein folding. This is Chaperonin GroEL from Mycobacterium asiaticum.